The chain runs to 74 residues: Conotoxin MiK41 (74 aa).

The first 22 residues, 1–22 (MKLTCVLIITVLFLTACQLTTA), serve as a signal peptide directing secretion. A propeptide spanning residues 23 to 45 (VTYSRGEHKHRALMSTGTNYRLP) is cleaved from the precursor. Cystine bridges form between C48–C62, C55–C66, and C61–C73.

Belongs to the conotoxin O1 superfamily. Expressed by the venom duct.

It is found in the secreted. The chain is Conotoxin MiK41 from Conus miles (Soldier cone).